We begin with the raw amino-acid sequence, 89 residues long: Small ribosomal subunit protein uS19 (89 aa).

Belongs to the universal ribosomal protein uS19 family.

Functionally, protein S19 forms a complex with S13 that binds strongly to the 16S ribosomal RNA. The sequence is that of Small ribosomal subunit protein uS19 from Xylella fastidiosa (strain 9a5c).